Here is a 64-residue protein sequence, read N- to C-terminus: Conotoxin Ts-011 (64 aa).

The N-terminal stretch at 1–22 (MHCLPVPVILLLLIASTPSVDA) is a signal peptide. Residues 23-51 (RPKTKDDVPPASFHGADNANRILRTLWNL) constitute a propeptide that is removed on maturation. Residue Ile63 is modified to Isoleucine amide.

The protein belongs to the conotoxin T superfamily. In terms of processing, contains 2 disulfide bonds that can be either 'C1-C3, C2-C4' or 'C1-C4, C2-C3', since these disulfide connectivities have been observed for conotoxins with cysteine framework V (for examples, see AC P0DQQ7 and AC P81755). Expressed by the venom duct.

It is found in the secreted. The chain is Conotoxin Ts-011 from Conus tessulatus (Tessellate cone).